We begin with the raw amino-acid sequence, 523 residues long: Pentatricopeptide repeat-containing protein At1g64580 (523 aa).

13 PPR repeats span residues 43–77, 78–112, 113–147, 148–182, 183–217, 218–252, 253–287, 288–322, 323–357, 358–392, 393–427, 428–462, and 463–497; these read HHHH…RPIP, SIVD…GISH, DLYS…GFRP, SIVT…GFVP, NVVI…GIRA, DAVT…KIDP, NVIF…SVVP, NVFT…GCFP, DVVT…GLVG, DAFT…GVSP, DIVT…EMDV, DIIT…GVKP, and DAIA…GFMP.

It belongs to the PPR family. P subfamily.

This chain is Pentatricopeptide repeat-containing protein At1g64580, found in Arabidopsis thaliana (Mouse-ear cress).